The following is a 111-amino-acid chain: Estrogen receptor (111 aa).

The interval 1–42 is disordered; the sequence is PSGYAVREAGPPAYYRPNSDNRRQGGRERLASTSDKGSMAVE. The modulating stretch occupies residues 1–49; that stretch reads PSGYAVREAGPPAYYRPNSDNRRQGGRERLASTSDKGSMAVESAKETRY. Basic and acidic residues predominate over residues 19–30; the sequence is SDNRRQGGRERL. S32 is modified (phosphoserine). 2 consecutive NR C4-type zinc fingers follow at residues 50 to 70 and 86 to 110; these read CAVCNDYASGYHYGVWSCEGC and CPATNQCTIDKNRRKSCQACRLRKC. Positions 50–111 form a DNA-binding region, nuclear receptor; that stretch reads CAVCNDYASG…CQACRLRKCY (62 aa).

The protein belongs to the nuclear hormone receptor family. NR3 subfamily. In terms of assembly, binds DNA as a homodimer. Can form a heterodimer with ESR2. Interacts with coactivator NCOA5. Interacts with PELP1, the interaction is enhanced by 17-beta-estradiol; the interaction increases ESR1 transcriptional activity. Interacts with NCOA7; the interaction is ligand-inducible. Interacts with AKAP13, CUEDC2, HEXIM1, KDM5A, MAP1S, SMARD1, and UBE1C. Interacts with MUC1; the interaction is stimulated by 7 beta-estradiol (E2) and enhances ESR1-mediated transcription. Interacts with DNTTIP2, and UIMC1. Interacts with KMT2D/MLL2. Interacts with ATAD2; the interaction is enhanced by estradiol. Interacts with KIF18A and LDB1. Interacts with RLIM (via its C-terminus). Interacts with MACROD1. Interacts with SH2D4A and PLCG. Interacts with SH2D4A; the interaction blocks binding to PLCG and inhibits estrogen-induced cell proliferation. Interacts with DYNLL1. Interacts with CCDC62; the interaction requires estradiol and appears to enhance the transcription of target genes. Interacts with NR2C1; the interaction prevents homodimerization of ESR1 and suppresses its transcriptional activity and cell growth. Interacts with DNAAF4. Interacts with PRMT2. Interacts with RBFOX2. Interacts with EP300; the interaction is estrogen-dependent and enhanced by CITED1. Interacts with CITED1; the interaction is estrogen-dependent. Interacts with FAM120B, FOXL2, PHB2 and SLC30A9. Interacts with coactivators NCOA3 and NCOA6. Interacts with STK3/MST2 only in the presence of SAV1 and vice-versa. Binds to CSNK1D. Interacts with NCOA2; NCOA2 can interact with ESR1 AF-1 and AF-2 domains simultaneously and mediate their transcriptional synergy. Interacts with DDX5. Interacts with NCOA1; the interaction seems to require a self-association of N-terminal and C-terminal regions. Interacts with ZNF366, DDX17, NFKB1, RELA, SP1 and SP3. Interacts with NRIP1. Interacts with GPER1; the interaction occurs in an estrogen-dependent manner. Interacts with CLOCK and the interaction is stimulated by estrogen. Interacts with TRIP4 (ufmylated); estrogen dependent. Interacts with LMTK3; the interaction phosphorylates ESR1 (in vitro) and protects it against proteasomal degradation. Interacts with CCAR2 (via N-terminus) in a ligand-independent manner. Interacts with ZFHX3. Interacts with SFR1 in a ligand-dependent and -independent manner. Interacts with DCAF13, LATS1 and DCAF1; regulates ESR1 ubiquitination and ubiquitin-mediated proteasomal degradation. Interacts (via DNA-binding domain) with POU4F2 (C-terminus); this interaction increases the estrogen receptor ESR1 transcriptional activity in a DNA- and ligand 17-beta-estradiol-independent manner. Interacts with ESRRB isoform 1. Interacts with UBE3A and WBP2. Interacts with GTF2B. Interacts with RBM39. In the absence of hormonal ligand, interacts with TACC1. Interacts with PI3KR1 or PI3KR2 and PTK2/FAK1. Interacts with SRC. Interacts with BAG1; the interaction is promoted in the absence of estradiol (17-beta-estradiol/E2). Interacts with and ubiquitinated by STUB1; the interaction is promoted in the absence of estradiol (17-beta-estradiol/E2). Interacts with NEDD8. Post-translationally, ubiquitinated; regulated by LATS1 via DCAF1 it leads to ESR1 proteasomal degradation. Deubiquitinated by OTUB1. Ubiquitinated by STUB1/CHIP; in the CA1 hippocampal region following loss of endogenous circulating estradiol (17-beta-estradiol/E2). Ubiquitinated by UBR5, leading to its degradation: UBR5 specifically recognizes and binds ligand-bound ESR1 when it is not associated with coactivators (NCOAs). In presence of NCOAs, the UBR5-degron is not accessible, preventing its ubiquitination and degradation. In terms of processing, dimethylated by PRMT1. Demethylated by JMJD6. Palmitoylated by ZDHHC7 and ZDHHC21. This modification is required for plasma membrane targeting and for rapid intracellular signaling via ERK and AKT kinases and cAMP generation, but not for signaling mediated by the nuclear hormone receptor. Post-translationally, phosphorylated by cyclin A/CDK2 and CK1. Phosphorylation probably enhances transcriptional activity. Dephosphorylation by PPP5C inhibits its transactivation activity. Phosphorylated by LMTK3 (in vitro).

The protein resides in the nucleus. Its subcellular location is the cytoplasm. The protein localises to the golgi apparatus. It is found in the cell membrane. Functionally, nuclear hormone receptor. The steroid hormones and their receptors are involved in the regulation of eukaryotic gene expression and affect cellular proliferation and differentiation in target tissues. Ligand-dependent nuclear transactivation involves either direct homodimer binding to a palindromic estrogen response element (ERE) sequence or association with other DNA-binding transcription factors, such as AP-1/c-Jun, c-Fos, ATF-2, Sp1 and Sp3, to mediate ERE-independent signaling. Ligand binding induces a conformational change allowing subsequent or combinatorial association with multiprotein coactivator complexes through LXXLL motifs of their respective components. Mutual transrepression occurs between the estrogen receptor (ER) and NF-kappa-B in a cell-type specific manner. Decreases NF-kappa-B DNA-binding activity and inhibits NF-kappa-B-mediated transcription from the IL6 promoter and displace RELA/p65 and associated coregulators from the promoter. Recruited to the NF-kappa-B response element of the CCL2 and IL8 promoters and can displace CREBBP. Present with NF-kappa-B components RELA/p65 and NFKB1/p50 on ERE sequences. Can also act synergistically with NF-kappa-B to activate transcription involving respective recruitment adjacent response elements; the function involves CREBBP. Can activate the transcriptional activity of TFF1. Also mediates membrane-initiated estrogen signaling involving various kinase cascades. Essential for MTA1-mediated transcriptional regulation of BRCA1 and BCAS3. Maintains neuronal survival in response to ischemic reperfusion injury when in the presence of circulating estradiol (17-beta-estradiol/E2). This is Estrogen receptor (ESR1) from Ovis aries (Sheep).